Here is a 152-residue protein sequence, read N- to C-terminus: Large ribosomal subunit protein bL9 (152 aa).

It belongs to the bacterial ribosomal protein bL9 family.

Functionally, binds to the 23S rRNA. The sequence is that of Large ribosomal subunit protein bL9 from Chlorobaculum tepidum (strain ATCC 49652 / DSM 12025 / NBRC 103806 / TLS) (Chlorobium tepidum).